We begin with the raw amino-acid sequence, 883 residues long: Leucine--tRNA ligase (883 aa).

A 'HIGH' region motif is present at residues 43–53 (PYPSGRIHIGH). The short motif at 630 to 634 (KMSKS) is the 'KMSKS' region element. An ATP-binding site is contributed by Lys-633.

The protein belongs to the class-I aminoacyl-tRNA synthetase family.

The protein localises to the cytoplasm. The enzyme catalyses tRNA(Leu) + L-leucine + ATP = L-leucyl-tRNA(Leu) + AMP + diphosphate. This is Leucine--tRNA ligase from Nitrobacter winogradskyi (strain ATCC 25391 / DSM 10237 / CIP 104748 / NCIMB 11846 / Nb-255).